The following is a 567-amino-acid chain: Fanconi anemia group C protein homolog (567 aa).

In terms of assembly, belongs to the multisubunit FA complex composed of FANCA, FANCB, FANCC, FANCE, FANCF, FANCG, FANCL/PHF9 and FANCM. This complex may also include HSP70. Interacts with ZBTB32. Upon IFNG induction, interacts with STAT1. Interacts with CDK1. Interacts with EIF2AK2.

The protein resides in the nucleus. The protein localises to the cytoplasm. DNA repair protein that may operate in a postreplication repair or a cell cycle checkpoint function. May be implicated in interstrand DNA cross-link repair and in the maintenance of normal chromosome stability. Upon IFNG induction, may facilitate STAT1 activation by recruiting STAT1 to IFNGR1. This is Fanconi anemia group C protein homolog (FANCC) from Bos taurus (Bovine).